The primary structure comprises 173 residues: 16S rRNA aminocarboxypropyltransferase (173 aa).

Positions 25, 72, 96, and 115 each coordinate S-adenosyl-L-methionine.

This sequence belongs to the TDD superfamily. TSR3 family.

It is found in the cytoplasm. The enzyme catalyses an N(1)-methylpseudouridine in rRNA + S-adenosyl-L-methionine = N(1)-methyl-N(3)-[(3S)-3-amino-3-carboxypropyl]pseudouridine in rRNA + S-methyl-5'-thioadenosine + H(+). In terms of biological role, aminocarboxypropyltransferase that catalyzes the aminocarboxypropyl transfer on pseudouridine corresponding to position 914 in M.jannaschii 16S rRNA. It constitutes the last step in biosynthesis of the hypermodified N1-methyl-N3-(3-amino-3-carboxypropyl) pseudouridine (m1acp3-Psi). The protein is 16S rRNA aminocarboxypropyltransferase of Methanococcoides burtonii (strain DSM 6242 / NBRC 107633 / OCM 468 / ACE-M).